A 334-amino-acid polypeptide reads, in one-letter code: Nucleoid-associated protein YejK (334 aa).

This sequence belongs to the YejK family.

Its subcellular location is the cytoplasm. The protein resides in the nucleoid. The polypeptide is Nucleoid-associated protein YejK (Escherichia fergusonii (strain ATCC 35469 / DSM 13698 / CCUG 18766 / IAM 14443 / JCM 21226 / LMG 7866 / NBRC 102419 / NCTC 12128 / CDC 0568-73)).